Consider the following 316-residue polypeptide: Tetrahydromethanopterin S-methyltransferase subunit H (316 aa).

This sequence belongs to the MtrH family. In terms of assembly, the complex is composed of 8 subunits; MtrA, MtrB, MtrC, MtrD, MtrE, MtrF, MtrG and MtrH.

The enzyme catalyses 5-methyl-5,6,7,8-tetrahydromethanopterin + coenzyme M + 2 Na(+)(in) = 5,6,7,8-tetrahydromethanopterin + methyl-coenzyme M + 2 Na(+)(out). Its pathway is one-carbon metabolism; methanogenesis from CO(2); methyl-coenzyme M from 5,10-methylene-5,6,7,8-tetrahydromethanopterin: step 2/2. In terms of biological role, part of a complex that catalyzes the formation of methyl-coenzyme M and tetrahydromethanopterin from coenzyme M and methyl-tetrahydromethanopterin. This is an energy-conserving, sodium-ion translocating step. MtrH catalyzes the transfer of the methyl group from methyl-tetrahydromethanopterin to the corrinoid prosthetic group of MtrA. The chain is Tetrahydromethanopterin S-methyltransferase subunit H from Methanosarcina acetivorans (strain ATCC 35395 / DSM 2834 / JCM 12185 / C2A).